Here is a 418-residue protein sequence, read N- to C-terminus: NADH-quinone oxidoreductase subunit D (418 aa).

It belongs to the complex I 49 kDa subunit family. In terms of assembly, NDH-1 is composed of 14 different subunits. Subunits NuoB, C, D, E, F, and G constitute the peripheral sector of the complex.

It is found in the cell inner membrane. The catalysed reaction is a quinone + NADH + 5 H(+)(in) = a quinol + NAD(+) + 4 H(+)(out). Its function is as follows. NDH-1 shuttles electrons from NADH, via FMN and iron-sulfur (Fe-S) centers, to quinones in the respiratory chain. The immediate electron acceptor for the enzyme in this species is believed to be ubiquinone. Couples the redox reaction to proton translocation (for every two electrons transferred, four hydrogen ions are translocated across the cytoplasmic membrane), and thus conserves the redox energy in a proton gradient. The chain is NADH-quinone oxidoreductase subunit D from Neisseria meningitidis serogroup C / serotype 2a (strain ATCC 700532 / DSM 15464 / FAM18).